The chain runs to 636 residues: Topoisomerase I damage affected protein 7 (636 aa).

Polar residues predominate over residues 1–18 (MNSNSTIGRTTLGESDTI). 5 disordered regions span residues 1–33 (MNSN…NSRS), 87–109 (TLVS…QYDP), 246–271 (NKDT…SSTN), 299–326 (PTSS…DDTT), and 339–362 (QSTT…STSP). Asn-4 carries an N-linked (GlcNAc...) asparagine glycan. Composition is skewed to low complexity over residues 19 to 33 (SLSF…NSRS) and 87 to 108 (TLVS…SQYD). An N-linked (GlcNAc...) asparagine glycan is attached at Asn-257. The helical transmembrane segment at 457–477 (IVGSVVGSVGGILICVLVVWF) threads the bilayer. N-linked (GlcNAc...) asparagine glycosylation occurs at Asn-492. A compositionally biased stretch (polar residues) spans 510–541 (QAKEASLQAQDSGSQQRNTETASANNPFSNEF). The interval 510 to 551 (QAKEASLQAQDSGSQQRNTETASANNPFSNEFNFKARGNPPP) is disordered. Lys-512 participates in a covalent cross-link: Glycyl lysine isopeptide (Lys-Gly) (interchain with G-Cter in ubiquitin). N-linked (GlcNAc...) asparagine glycans are attached at residues Asn-557, Asn-562, and Asn-626. At Ser-628 the chain carries Phosphoserine.

It belongs to the TDA7 family.

Its subcellular location is the vacuole membrane. This chain is Topoisomerase I damage affected protein 7 (TDA7), found in Saccharomyces cerevisiae (strain ATCC 204508 / S288c) (Baker's yeast).